The following is a 197-amino-acid chain: Prefoldin subunit 3 (197 aa).

Ala2 carries the post-translational modification N-acetylalanine. Lys59 carries the N6-acetyllysine modification.

The protein belongs to the prefoldin subunit alpha family. As to quaternary structure, heterohexamer of two PFD-alpha type and four PFD-beta type subunits. Binds to the C-terminal part of VHL.

The protein localises to the cytoplasm. Its subcellular location is the nucleus. Its function is as follows. Binds specifically to cytosolic chaperonin (c-CPN) and transfers target proteins to it. Binds to nascent polypeptide chain and promotes folding in an environment in which there are many competing pathways for nonnative proteins. This Bos taurus (Bovine) protein is Prefoldin subunit 3 (VBP1).